Here is a 142-residue protein sequence, read N- to C-terminus: Large ribosomal subunit protein uL11 (142 aa).

Belongs to the universal ribosomal protein uL11 family. In terms of assembly, part of the ribosomal stalk of the 50S ribosomal subunit. Interacts with L10 and the large rRNA to form the base of the stalk. L10 forms an elongated spine to which L12 dimers bind in a sequential fashion forming a multimeric L10(L12)X complex. One or more lysine residues are methylated.

Functionally, forms part of the ribosomal stalk which helps the ribosome interact with GTP-bound translation factors. The polypeptide is Large ribosomal subunit protein uL11 (Shigella boydii serotype 18 (strain CDC 3083-94 / BS512)).